Here is a 192-residue protein sequence, read N- to C-terminus: Large ribosomal subunit protein bL9 (192 aa).

The tract at residues 172 to 192 is disordered; the sequence is DALRPEDFFDPEADGVDEDEA. Residues 179–192 are compositionally biased toward acidic residues; it reads FFDPEADGVDEDEA.

This sequence belongs to the bacterial ribosomal protein bL9 family.

In terms of biological role, binds to the 23S rRNA. The protein is Large ribosomal subunit protein bL9 of Rhizobium leguminosarum bv. trifolii (strain WSM2304).